The sequence spans 120 residues: NAD(P)H-quinone oxidoreductase subunit 3 (120 aa).

Transmembrane regions (helical) follow at residues 10 to 30 (FLGF…TNLI), 64 to 84 (MFAL…PWAV), and 89 to 109 (LGLL…IALA).

Belongs to the complex I subunit 3 family. In terms of assembly, NDH-1 can be composed of about 15 different subunits; different subcomplexes with different compositions have been identified which probably have different functions.

The protein localises to the cellular thylakoid membrane. The catalysed reaction is a plastoquinone + NADH + (n+1) H(+)(in) = a plastoquinol + NAD(+) + n H(+)(out). It catalyses the reaction a plastoquinone + NADPH + (n+1) H(+)(in) = a plastoquinol + NADP(+) + n H(+)(out). Functionally, NDH-1 shuttles electrons from an unknown electron donor, via FMN and iron-sulfur (Fe-S) centers, to quinones in the respiratory and/or the photosynthetic chain. The immediate electron acceptor for the enzyme in this species is believed to be plastoquinone. Couples the redox reaction to proton translocation, and thus conserves the redox energy in a proton gradient. Cyanobacterial NDH-1 also plays a role in inorganic carbon-concentration. The protein is NAD(P)H-quinone oxidoreductase subunit 3 of Prochlorococcus marinus (strain MIT 9515).